The sequence spans 380 residues: Cytochrome b (380 aa).

Transmembrane regions (helical) follow at residues 34-54, 78-99, 114-134, and 179-199; these read FGSL…LLAM, WLLH…FLHI, WNTG…GYVL, and FFAL…IHLM. Residues histidine 84 and histidine 98 each contribute to the heme b site. Heme b contacts are provided by histidine 183 and histidine 197. Residue histidine 202 coordinates a ubiquinone. 4 helical membrane passes run 227 to 247, 289 to 309, 321 to 341, and 348 to 368; these read IKDI…TLFS, LGGV…PFLH, LSQT…WVGS, and FIII…ILFP.

Belongs to the cytochrome b family. In terms of assembly, the cytochrome bc1 complex contains 11 subunits: 3 respiratory subunits (MT-CYB, CYC1 and UQCRFS1), 2 core proteins (UQCRC1 and UQCRC2) and 6 low-molecular weight proteins (UQCRH/QCR6, UQCRB/QCR7, UQCRQ/QCR8, UQCR10/QCR9, UQCR11/QCR10 and a cleavage product of UQCRFS1). This cytochrome bc1 complex then forms a dimer. Requires heme b as cofactor.

The protein localises to the mitochondrion inner membrane. Its function is as follows. Component of the ubiquinol-cytochrome c reductase complex (complex III or cytochrome b-c1 complex) that is part of the mitochondrial respiratory chain. The b-c1 complex mediates electron transfer from ubiquinol to cytochrome c. Contributes to the generation of a proton gradient across the mitochondrial membrane that is then used for ATP synthesis. The protein is Cytochrome b (MT-CYB) of Meleagris gallopavo (Wild turkey).